The following is a 298-amino-acid chain: Small ribosomal subunit biogenesis GTPase RsgA (298 aa).

The CP-type G domain maps to 67–228 (TNELIRPPIC…VADTPGFSSL (162 aa)). 116–119 (TKMD) contributes to the GTP binding site. Phosphothreonine is present on threonine 166. 171–179 (GQSGVGKSS) provides a ligand contact to GTP. Positions 252, 257, 259, and 265 each coordinate Zn(2+).

This sequence belongs to the TRAFAC class YlqF/YawG GTPase family. RsgA subfamily. Monomer, but able to form dimers. Associates with 30S ribosomal subunit; a phospho-mimetic mutation increases association. Probably binds 16S rRNA. It depends on Zn(2+) as a cofactor. In vitro phosphorylated mostly on Thr (with lower signal on Ser) by PrkC in the presence of poly-L-Lys or myelin basic protein, dephosphorylated by PrpC. Most in vitro phosphorylation occurs on Thr-166, in vivo phosphorylation has not been detected, but it might vary during the cell cycle.

The protein localises to the cytoplasm. One of several proteins that assist in the late maturation steps of the functional core of the 30S ribosomal subunit. Helps release RbfA from mature subunits. May play a role in the assembly of ribosomal proteins into the subunit. Circularly permuted GTPase with a low level of activity and slow catalytic turnover, does not act on ATP. GTPase activity is stimulated by the presence of 30S or 70S ribosomes, phosphorylation increases stimulation. Depletion results in increased sensitivity to protein synthesis inhibitors that block the peptide channel or peptidyl transferase center on the ribosome, suggesting this protein functions in conjunction with the ribosome in vivo. Decreasing levels of protein lead to an increase in free 30S and 50S ribosomal subunits and a decrease in assembled 70S ribosomes. Suggested to serve as a specific transcription factor for proteins involved in late stages of peptidoglycan synthesis. This chain is Small ribosomal subunit biogenesis GTPase RsgA, found in Bacillus subtilis (strain 168).